Here is a 400-residue protein sequence, read N- to C-terminus: Phosphoglycerate kinase (400 aa).

Residues 21–23, arginine 36, 59–62, arginine 118, and arginine 151 contribute to the substrate site; these read DFN and HLGR. Residues lysine 201, glycine 293, glutamate 324, and 353–356 each bind ATP; that span reads GGDS.

This sequence belongs to the phosphoglycerate kinase family. Monomer.

The protein localises to the cytoplasm. The catalysed reaction is (2R)-3-phosphoglycerate + ATP = (2R)-3-phospho-glyceroyl phosphate + ADP. It functions in the pathway carbohydrate degradation; glycolysis; pyruvate from D-glyceraldehyde 3-phosphate: step 2/5. The sequence is that of Phosphoglycerate kinase from Fervidobacterium nodosum (strain ATCC 35602 / DSM 5306 / Rt17-B1).